We begin with the raw amino-acid sequence, 808 residues long: MLHSPIPTKADPMIFEAAADRAARAIPPVWPLMSSVAVNPFLGQAGETLAKAGARLARVAGIAITMPRHWYQQKIDTGEISDADLLAALACAPADLRPIDLAALKAAAALNPPRPQALASVADLAARASGVDWPGLLTERLGAWMAGYFDEGQALWAAPRGKSAYGAWRAVATHDLTPEIAGLRGFARHVSEAPETAMAVIARVCTRLDLPVEALETYFHQMLMSLGGWGQYARYKLWQAELAGGSDQTITDLLAIRLIWEEALFLRYGDQIGEAWAHVRVAHAAPVVATPDLMIDAILQDAAERAAQRELARILAGNAPQIHETRPLVQAAFCIDVRSEVFRRALESLNPQIQTLGFAGFFGLAASHRRFASDVAESRFPVLLNPALKSRAGGPYRAEDAEPQRIKARAKRAWGRFKLAAVSSFAFVEATGPIYVGKLLSDALGLPHASAPNDPAPQLDPALDLASRVKAAGAVLRAMSLTTGFARLVLLAGHGANTVNNPHASGLHCGACGGYSGEVNARLLAALLNDPDVRAGLTETGMAIPQDTLFLAALHDTTTDRVTLYADDHPCQTHEADIAQARTWLADAGRLARGERALRLPRAADETSISKRSRDWSETRPEWALAGCKAFIAAPRSRTATKNLEGRAFLHDYDWTQDKSFSTLELILTAPVIVASWISLQYYGSTVAPEAFGGGNKLLHNVTGGIGVVEGNGGLLRAGLPWQSVHDGQNYMHEPLRLSVCLEAPVAAISEVLGRHDGVRALFDNGWLHLFTLNEEGSIAWRYNGGLQWVPIDDTEDAEQRSKLKVAV.

The Zn(2+) site is built by Cys-334, Asp-336, His-494, and Cys-509.

Belongs to the inorganic carbon transporter (TC 9.A.2) DabA family. As to quaternary structure, forms a complex with DabB. Zn(2+) is required as a cofactor.

Its subcellular location is the cell inner membrane. In terms of biological role, part of an energy-coupled inorganic carbon pump. The polypeptide is Probable inorganic carbon transporter subunit DabA (Allorhizobium ampelinum (strain ATCC BAA-846 / DSM 112012 / S4) (Agrobacterium vitis (strain S4))).